The following is a 491-amino-acid chain: Leucine aminopeptidase 1 (491 aa).

Residues Lys252 and Asp257 each contribute to the Zn(2+) site. Lys264 is a catalytic residue. 3 residues coordinate Zn(2+): Asp275, Asp334, and Glu336. The active site involves Arg338.

The protein belongs to the peptidase M17 family. The cofactor is Zn(2+). In terms of tissue distribution, expressed in the buccal cavity, pharynx, anterior gut and rectum.

The catalysed reaction is Release of an N-terminal amino acid, Xaa-|-Yaa-, in which Xaa is preferably Leu, but may be other amino acids including Pro although not Arg or Lys, and Yaa may be Pro. Amino acid amides and methyl esters are also readily hydrolyzed, but rates on arylamides are exceedingly low.. Its function is as follows. Probably acts as a digestive enzyme. This Caenorhabditis elegans protein is Leucine aminopeptidase 1 (lap-1).